The primary structure comprises 2626 residues: Unconventional myosin-IXa (2626 aa).

The Ras-associating domain maps to 14–112 (NEHTLRIYPG…YRFLLREKNL (99 aa)). Residues 146–1017 (KDFDDLCSLP…ERQHLQDLLH (872 aa)) form the Myosin motor domain. Residues 175–195 (IYTYVGSILIAINPFKFLPIY) form a helical membrane-spanning segment. Residue 239–246 (GESGSGKT) participates in ATP binding. The residue at position 755 (Ser-755) is a Phosphoserine. The segment at 908-919 (QAEPYFVKCIRS) is actin-binding. IQ domains follow at residues 1021–1041 (LRRI…QQFL), 1043–1072 (LRQA…EKDA), 1075–1104 (MASA…AAVI), 1116–1145 (RHRA…KIIL), and 1139–1168 (QRNK…ERLK). A neck or regulatory domain region spans residues 1022 to 1163 (RRIILLQRWF…RARQRYKALK (142 aa)). The interval 1164–2589 (EERLKETKLE…LKNVKNSPQK (1426 aa)) is tail. The segment covering 1221-1240 (RESSMDFSKESPDKQQERGR) has biased composition (basic and acidic residues). A disordered region spans residues 1221-1276 (RESSMDFSKESPDKQQERGRSQSGTDLQGDVIVRQRPKSLEDLHQKKVGRAKRESR). Ser-1243 is subject to Phosphoserine. Thr-1245 is subject to Phosphothreonine. Phosphoserine is present on Ser-1259. A coiled-coil region spans residues 1265-1292 (QKKVGRAKRESRRMRELEQAIFSLELLK). Positions 1266–1276 (KKVGRAKRESR) are enriched in basic residues. Phosphoserine is present on residues Ser-1300 and Ser-1318. The span at 1360–1375 (PSTFTNPKFDSQNNAL) shows a compositional bias: polar residues. The segment at 1360–1397 (PSTFTNPKFDSQNNALSASSETSSTFSGKGASSDSEHL) is disordered. The segment covering 1376 to 1386 (SASSETSSTFS) has biased composition (low complexity). The stretch at 1493 to 1540 (TVLKKLEKLNIEKEKRQKQLQQQNEKEMMEQIRQQTDILEKERKAFKT) forms a coiled coil. Disordered stretches follow at residues 1562 to 1602 (VERP…PPKD), 1618 to 1673 (SRTV…SRPI), 1689 to 1726 (GNPQ…RMAR), 1765 to 1784 (SELG…SEMT), and 1872 to 1907 (QYHP…KRGV). 2 stretches are compositionally biased toward basic and acidic residues: residues 1620–1632 (TVKE…RMGT) and 1659–1669 (HRSDDPSREGS). The segment covering 1716–1726 (PAHKKKARMAR) has biased composition (basic residues). The segment covering 1772 to 1784 (SLGQASHSDSEMT) has biased composition (polar residues). A compositionally biased stretch (basic and acidic residues) spans 1887-1899 (CRKEFKENKEPSP). Ser-2016 carries the phosphoserine modification. A Phorbol-ester/DAG-type zinc finger spans residues 2067-2116 (GHMFKATQYSIPTYCEYCSSLIWIMDRASVCKLCKYACHKKCCLKTTAKC). The region spanning 2131 to 2319 (VELSRLTSED…LIVVEQMNKY (189 aa)) is the Rho-GAP domain. Residues 2365–2385 (SGKGRLHRGSHPNPSSPVIVR) form a disordered region. Phosphoserine is present on Ser-2380. A coiled-coil region spans residues 2408–2444 (TDQQQAAMQQEEKVLTEQIENLQKEKEELTFEMLVLE). A disordered region spans residues 2449-2527 (DDEALESEAS…NTTSSHGTRK (79 aa)). Over residues 2504–2522 (SLDSVSSSVSSCLSNTTSS) the composition is skewed to low complexity. Ser-2542 carries the phosphoserine modification. Residues 2552-2614 (PLGQAKSLED…TVDSDCSSTQ (63 aa)) are disordered.

It belongs to the TRAFAC class myosin-kinesin ATPase superfamily. Myosin family. Post-translationally, phosphorylated by ALPK1 following monosodium urate monohydrate (MSU)-induced inflammation. Expressed at high levels in brain, followed by testis and spleen. Expressed at very low levels, in kidney. Detected abundantly in brain and testis and at lower levels in adrenal gland, kidney, lung and spleen (at protein level). In adrenal gland it is mostly found in the medulla but not in the cortex. In brain, it is found in the cerebellum and the CA2-CA3 regions of the hippocampus.

The protein resides in the membrane. It is found in the cytoplasm. Its subcellular location is the synapse. It localises to the cell projection. The protein localises to the growth cone. Its function is as follows. Myosins are actin-based motor molecules with ATPase activity. Unconventional myosins serve in intracellular movements. Regulates Rho by stimulating it's GTPase activity in neurons. Required for the regulation of neurite branching and motor neuron axon guidance. In Rattus norvegicus (Rat), this protein is Unconventional myosin-IXa (Myo9a).